A 102-amino-acid chain; its full sequence is uncharacterized protein (102 aa).

This is an uncharacterized protein from Saccharomyces cerevisiae (strain ATCC 204508 / S288c) (Baker's yeast).